Reading from the N-terminus, the 203-residue chain is Large ribosomal subunit protein uL13 (203 aa).

At Ala-2 the chain carries N-acetylalanine. Citrulline is present on Arg-59. At Ser-77 the chain carries Phosphoserine; by ZIPK/DAPK3. Arg-140 bears the Citrulline mark. Lys-191 carries the post-translational modification N6-acetyllysine.

Belongs to the universal ribosomal protein uL13 family. As to quaternary structure, component of the 60S ribosome. Component of the GAIT complex. Interacts with EIF4G1. Phosphorylation at Ser-77 upon interferon-gamma treatment in monocytes involves a DAPK1-DAPK3 kinase cascade and is causing release from the ribosome, association with the GAIT complex and subsequent involvement in transcript-selective translation inhibition. Post-translationally, citrullinated by PADI4.

It is found in the cytoplasm. Its function is as follows. Associated with ribosomes but is not required for canonical ribosome function and has extra-ribosomal functions. Component of the GAIT (gamma interferon-activated inhibitor of translation) complex which mediates interferon-gamma-induced transcript-selective translation inhibition in inflammation processes. Upon interferon-gamma activation and subsequent phosphorylation dissociates from the ribosome and assembles into the GAIT complex which binds to stem loop-containing GAIT elements in the 3'-UTR of diverse inflammatory mRNAs (such as ceruplasmin) and suppresses their translation. In the GAIT complex interacts with m7G cap-bound eIF4G at or near the eIF3-binding site and blocks the recruitment of the 43S ribosomal complex. Involved in methylation of rRNA. This chain is Large ribosomal subunit protein uL13 (RPL13A), found in Homo sapiens (Human).